Here is a 342-residue protein sequence, read N- to C-terminus: S-adenosyl-L-methionine-dependent tRNA 4-demethylwyosine synthase (342 aa).

Residues Cys45, Cys58, and Cys71 each coordinate [2Fe-2S] cluster. One can recognise a Radical SAM core domain in the interval 64 to 312; that stretch reads YGIHSHRCLQ…VKHLPGYHIE (249 aa). Residues Cys81, Cys85, and Cys88 each contribute to the [4Fe-4S] cluster site.

This sequence belongs to the TYW1 family. In terms of assembly, monomer. [2Fe-2S] cluster serves as cofactor. The cofactor is [4Fe-4S] cluster.

The protein localises to the cytoplasm. The catalysed reaction is N(1)-methylguanosine(37) in tRNA(Phe) + pyruvate + S-adenosyl-L-methionine = 4-demethylwyosine(37) in tRNA(Phe) + 5'-deoxyadenosine + L-methionine + CO2 + H2O. Functionally, component of the wyosine derivatives biosynthesis pathway that catalyzes the condensation of N-methylguanine with 2 carbon atoms from pyruvate to form the tricyclic 4-demethylwyosine (imG-14) on guanosine-37 of tRNA(Phe). This Pyrococcus horikoshii (strain ATCC 700860 / DSM 12428 / JCM 9974 / NBRC 100139 / OT-3) protein is S-adenosyl-L-methionine-dependent tRNA 4-demethylwyosine synthase.